We begin with the raw amino-acid sequence, 97 residues long: Large ribosomal subunit protein bL25 (97 aa).

It belongs to the bacterial ribosomal protein bL25 family. Part of the 50S ribosomal subunit; part of the 5S rRNA/L5/L18/L25 subcomplex. Contacts the 5S rRNA. Binds to the 5S rRNA independently of L5 and L18.

Functionally, this is one of the proteins that binds to the 5S RNA in the ribosome where it forms part of the central protuberance. This Blochmanniella pennsylvanica (strain BPEN) protein is Large ribosomal subunit protein bL25.